A 23-amino-acid polypeptide reads, in one-letter code: Aurein-4.1 (23 aa).

The protein belongs to the frog skin active peptide (FSAP) family. Aurein subfamily. In terms of tissue distribution, expressed by the skin dorsal glands.

The protein resides in the secreted. In terms of biological role, has no antimicrobial or anticancer activity. The sequence is that of Aurein-4.1 from Ranoidea aurea (Green and golden bell frog).